A 360-amino-acid polypeptide reads, in one-letter code: UDP-N-acetylglucosamine--N-acetylmuramyl-(pentapeptide) pyrophosphoryl-undecaprenol N-acetylglucosamine transferase (360 aa).

UDP-N-acetyl-alpha-D-glucosamine-binding residues include serine 198 and glutamine 289.

The protein belongs to the glycosyltransferase 28 family. MurG subfamily.

The protein localises to the cell membrane. The catalysed reaction is Mur2Ac(oyl-L-Ala-gamma-D-Glu-L-Lys-D-Ala-D-Ala)-di-trans,octa-cis-undecaprenyl diphosphate + UDP-N-acetyl-alpha-D-glucosamine = beta-D-GlcNAc-(1-&gt;4)-Mur2Ac(oyl-L-Ala-gamma-D-Glu-L-Lys-D-Ala-D-Ala)-di-trans,octa-cis-undecaprenyl diphosphate + UDP + H(+). Its pathway is cell wall biogenesis; peptidoglycan biosynthesis. Its function is as follows. Cell wall formation. Catalyzes the transfer of a GlcNAc subunit on undecaprenyl-pyrophosphoryl-MurNAc-pentapeptide (lipid intermediate I) to form undecaprenyl-pyrophosphoryl-MurNAc-(pentapeptide)GlcNAc (lipid intermediate II). The chain is UDP-N-acetylglucosamine--N-acetylmuramyl-(pentapeptide) pyrophosphoryl-undecaprenol N-acetylglucosamine transferase from Streptococcus pyogenes serotype M6 (strain ATCC BAA-946 / MGAS10394).